Consider the following 371-residue polypeptide: Peptide chain release factor 2 (371 aa).

The residue at position 253 (glutamine 253) is an N5-methylglutamine.

It belongs to the prokaryotic/mitochondrial release factor family. In terms of processing, methylated by PrmC. Methylation increases the termination efficiency of RF2.

It is found in the cytoplasm. In terms of biological role, peptide chain release factor 2 directs the termination of translation in response to the peptide chain termination codons UGA and UAA. This Mycobacterium marinum (strain ATCC BAA-535 / M) protein is Peptide chain release factor 2.